The primary structure comprises 906 residues: MLGKIIAKLFGSRNERIIKQLSKTVKKINALEESMIALDDAALRAKTDEFRKRLTEGETLDDVLPEAFAVVREAAKRVLGLRHYDVQLIGGMVLHQGKIAEMRTGEGKTLVATLAVYLNALSGEGVHVVTVNDYLAKRDGGELGKLYSFLGLTTGIIVSGMDTEEKKAAYRADITYGTNSEFGFDYLRTNMALSPDQRLQRKLNFAIVDEVDSILIDEARTPLIISGPAEMNTELYRKLNELVPYLTLQKKDPNQEKRSLLNDEEEIETGDFSIDEKTKQVGLTEMGHAHIEKLLVEKGLIAENESLYEPKNIGLFHHLNACLRAHHLYHRDVDYIVKDGQVMIVDEFTGRTLAGRRWSDGLHQAIEIKEGVTVQQESQTLASITYQNFFRMYEKLSGMTGTADTEAYEFQDIYNLETVVIPTNRPIARIDYTDMIFLKQSGKYQAIVAEVKECLARRQPVLLGTASIETSELISDLLTKEGVAHNVLNAKQHAREAEIVANAGLPGQITIATNMAGRGTDIVLGGSLKAELDKLGADATEEEKAAVQEAWQKRHDEVIAAGGLHVIGAERHESRRIDNQLRGRSGRQGDPGSSRFYVALDDNLVRIFAGDRMAGMMERLGMGENDVIESKMVSRQIEGAQRKVEAHNFDARKHLLEYDDVANEQRKVIYNQRSVIMDAENIREMLDEMRESIVTRLITHYVPADQVRQNWEVAGLEAALLNEFGLSIAVEKEWLAKEPDLSVDEIQKRLLAAFNAIDAQKRAQYGDDMMDWAGKYVALQIIDELWKGHLATMDMLRQAIWLRSRAQKDPKREYQRESYELFIDLLANIQLQIVRLLNHITFNAPNAESTATAAEPAPEASQSQSTNDATASQNPPITEVEASKVGRNQPCPCGSGKKYKHCCGKL.

Residues Gln-87, 105-109 (GEGKT), and Asp-521 each bind ATP. A compositionally biased stretch (low complexity) spans 849–865 (STATAAEPAPEASQSQS). Residues 849-897 (STATAAEPAPEASQSQSTNDATASQNPPITEVEASKVGRNQPCPCGSGK) form a disordered region. A compositionally biased stretch (polar residues) spans 866-876 (TNDATASQNPP). Residues Cys-891, Cys-893, Cys-902, and Cys-903 each coordinate Zn(2+).

This sequence belongs to the SecA family. As to quaternary structure, monomer and homodimer. Part of the essential Sec protein translocation apparatus which comprises SecA, SecYEG and auxiliary proteins SecDF-YajC and YidC. The cofactor is Zn(2+).

The protein localises to the cell inner membrane. It localises to the cytoplasm. It catalyses the reaction ATP + H2O + cellular proteinSide 1 = ADP + phosphate + cellular proteinSide 2.. In terms of biological role, part of the Sec protein translocase complex. Interacts with the SecYEG preprotein conducting channel. Has a central role in coupling the hydrolysis of ATP to the transfer of proteins into and across the cell membrane, serving both as a receptor for the preprotein-SecB complex and as an ATP-driven molecular motor driving the stepwise translocation of polypeptide chains across the membrane. The chain is Protein translocase subunit SecA from Dichelobacter nodosus (strain VCS1703A).